Consider the following 276-residue polypeptide: 3' cyclic ADP-D-ribose synthase HopAM1 (276 aa).

Residues 20–38 are compositionally biased toward polar residues; sequence VEASQVKSAGTSSTTNIDS. The disordered stretch occupies residues 20–39; that stretch reads VEASQVKSAGTSSTTNIDSK. Residues 165–214 are TIR domain; sequence KNGIAHAKKMAFFITPEWLGSDFCKQEFQWLSETKNKDIKSAFVIFKDVD. Glutamine 190 is an active-site residue.

As to quaternary structure, homodimer.

The protein localises to the host cytoplasm. The protein resides in the host cytosol. The enzyme catalyses NAD(+) = 3'cADPR + nicotinamide + H(+). Its function is as follows. NAD(+) hydrolase (NADase) that cleaves NAD(+) into nicotinamide and 3' cyclic ADP-D-ribose (3'cADPR, v2-cADPR). Upon infiltration of A.thaliana with this bacteria an effector-triggered immunity-like phenotype (ETI-like, cell death with severe chlorosis) is seen, 3'cADPR levels rise while NAD(+) levels remain constant. Plant immune responses are suppressed. Triggers hypersensitive response-like cell death in Nicotiana tabacum cv. Xanthi and N.benthamiana when transiently expressed, depletes NAD(+) in N.benthamiana. Causes cell death upon induction in yeast due to NAD(+) depletion and/or 3'cADPR itself. Transgenic A.thaliana expressing HopAM1 suppresses its plant immune system upon challenge; the plants produce 3'cADPR without significantly depleting NAD(+). The sequence is that of 3' cyclic ADP-D-ribose synthase HopAM1 from Pseudomonas syringae pv. tomato (strain ATCC BAA-871 / DC3000).